The chain runs to 495 residues: OTU domain-containing protein CG3251 (495 aa).

Residues Leu-29–Met-150 form the OTU domain. In terms of domain architecture, Tudor spans Asn-302–Ala-364. The segment covering Leu-375 to Gln-389 has biased composition (polar residues). Positions Leu-375–Met-404 are disordered. The segment covering Asp-395–Met-404 has biased composition (pro residues).

In terms of biological role, putative OTU-type deubiquitinase. Catalytically inactive towards all diubiquitin molecules and long K48- and K63- linked ubiquitin chains in vitro. Potential modulator of apoptosis. The protein is OTU domain-containing protein CG3251 of Drosophila melanogaster (Fruit fly).